A 242-amino-acid polypeptide reads, in one-letter code: Lactate utilization protein A 2 (242 aa).

Belongs to the LutA/YkgE family.

Its function is as follows. Is involved in L-lactate degradation and allows cells to grow with lactate as the sole carbon source. The protein is Lactate utilization protein A 2 of Bacillus cereus (strain ZK / E33L).